The following is a 486-amino-acid chain: FAD-dependent oxidoreductase domain-containing protein 1 (486 aa).

The chain crosses the membrane as a helical span at residues 66–86 (VVVVGGGVLGLSVAYWLKQLE).

Associates with components of the mitochondrial respiratory chain complex I. Requires FAD as cofactor.

The protein localises to the mitochondrion inner membrane. Required for the assembly of the mitochondrial membrane respiratory chain NADH dehydrogenase (Complex I). Involved in mid-late stages of complex I assembly. This chain is FAD-dependent oxidoreductase domain-containing protein 1 (FOXRED1), found in Macaca fascicularis (Crab-eating macaque).